The sequence spans 287 residues: Phosphatidylserine decarboxylase proenzyme (287 aa).

Residues Asp-89, His-146, and Ser-252 each act as charge relay system; for autoendoproteolytic cleavage activity in the active site. Ser-252 functions as the Schiff-base intermediate with substrate; via pyruvic acid; for decarboxylase activity in the catalytic mechanism. Ser-252 carries the pyruvic acid (Ser); by autocatalysis modification.

This sequence belongs to the phosphatidylserine decarboxylase family. PSD-B subfamily. Prokaryotic type I sub-subfamily. Heterodimer of a large membrane-associated beta subunit and a small pyruvoyl-containing alpha subunit. Requires pyruvate as cofactor. Is synthesized initially as an inactive proenzyme. Formation of the active enzyme involves a self-maturation process in which the active site pyruvoyl group is generated from an internal serine residue via an autocatalytic post-translational modification. Two non-identical subunits are generated from the proenzyme in this reaction, and the pyruvate is formed at the N-terminus of the alpha chain, which is derived from the carboxyl end of the proenzyme. The autoendoproteolytic cleavage occurs by a canonical serine protease mechanism, in which the side chain hydroxyl group of the serine supplies its oxygen atom to form the C-terminus of the beta chain, while the remainder of the serine residue undergoes an oxidative deamination to produce ammonia and the pyruvoyl prosthetic group on the alpha chain. During this reaction, the Ser that is part of the protease active site of the proenzyme becomes the pyruvoyl prosthetic group, which constitutes an essential element of the active site of the mature decarboxylase.

It localises to the cell membrane. It carries out the reaction a 1,2-diacyl-sn-glycero-3-phospho-L-serine + H(+) = a 1,2-diacyl-sn-glycero-3-phosphoethanolamine + CO2. Its pathway is phospholipid metabolism; phosphatidylethanolamine biosynthesis; phosphatidylethanolamine from CDP-diacylglycerol: step 2/2. Functionally, catalyzes the formation of phosphatidylethanolamine (PtdEtn) from phosphatidylserine (PtdSer). The chain is Phosphatidylserine decarboxylase proenzyme from Shewanella halifaxensis (strain HAW-EB4).